The primary structure comprises 208 residues: Uracil phosphoribosyltransferase (208 aa).

Residues arginine 78, arginine 103, and 130–138 (DPMLATGGS) contribute to the 5-phospho-alpha-D-ribose 1-diphosphate site. Uracil contacts are provided by residues isoleucine 193 and 198–200 (GDA). Aspartate 199 provides a ligand contact to 5-phospho-alpha-D-ribose 1-diphosphate.

Belongs to the UPRTase family. Mg(2+) is required as a cofactor.

It catalyses the reaction UMP + diphosphate = 5-phospho-alpha-D-ribose 1-diphosphate + uracil. The protein operates within pyrimidine metabolism; UMP biosynthesis via salvage pathway; UMP from uracil: step 1/1. Its activity is regulated as follows. Allosterically activated by GTP. Catalyzes the conversion of uracil and 5-phospho-alpha-D-ribose 1-diphosphate (PRPP) to UMP and diphosphate. The chain is Uracil phosphoribosyltransferase from Neisseria meningitidis serogroup C (strain 053442).